The chain runs to 66 residues: Phylloseptin-H7 (66 aa).

A signal peptide spans 1–22; it reads MAFLKKSLFLVLFLGLVSLSIC. Positions 23–44 are excised as a propeptide; it reads EEEKRETEEEENDQEEDDKSEE. The interval 25–44 is disordered; it reads EKRETEEEENDQEEDDKSEE. A compositionally biased stretch (acidic residues) spans 30 to 41; the sequence is EEEENDQEEDDK. At leucine 65 the chain carries Leucine amide.

Expressed by the skin glands.

It is found in the secreted. In terms of biological role, has antimicrobial activity. In Pithecopus hypochondrialis (Orange-legged leaf frog), this protein is Phylloseptin-H7.